We begin with the raw amino-acid sequence, 423 residues long: Glutamate-1-semialdehyde 2,1-aminomutase (423 aa).

Residue Lys259 is modified to N6-(pyridoxal phosphate)lysine.

This sequence belongs to the class-III pyridoxal-phosphate-dependent aminotransferase family. HemL subfamily. Homodimer. Pyridoxal 5'-phosphate serves as cofactor.

Its subcellular location is the cytoplasm. The catalysed reaction is (S)-4-amino-5-oxopentanoate = 5-aminolevulinate. Its pathway is porphyrin-containing compound metabolism; protoporphyrin-IX biosynthesis; 5-aminolevulinate from L-glutamyl-tRNA(Glu): step 2/2. In Thermosipho africanus (strain TCF52B), this protein is Glutamate-1-semialdehyde 2,1-aminomutase.